Here is a 1237-residue protein sequence, read N- to C-terminus: Anion exchange protein 2 (1237 aa).

The disordered stretch occupies residues 1 to 237 (MSSAPRRPAS…SYNLQERRRI (237 aa)). At 1 to 703 (MSSAPRRPAS…SDFRDALDPQ (703 aa)) the chain is on the cytoplasmic side. Composition is skewed to basic and acidic residues over residues 37–49 (ELHR…RFEE) and 58–75 (GGEE…EYHR). Composition is skewed to basic residues over residues 76–85 (QSSHHIHHPL) and 94–110 (RRRK…RRRP). Position 113 is a phosphoserine (serine 113). Over residues 122 to 133 (EEGEEDEEEANE) the composition is skewed to acidic residues. Residues 137 to 151 (ARAPTEPSPASTPSS) are compositionally biased toward low complexity. 3 positions are modified to phosphoserine: serine 144, serine 170, and serine 172. Gly residues predominate over residues 206–215 (TAGGDNGGAS). Serine 239 is modified (phosphoserine). Phosphothreonine is present on threonine 253. Lysine 270 carries the N6-methyllysine modification. The interval 281–316 (RRHLVRKNAKGSAQSSREGREPGPTPRSRPRAPHKP) is disordered. Serine 439 is modified (phosphoserine). Residues 445 to 464 (SLLGHHHGQGAESDPHVTEP) are disordered. A run of 4 helical transmembrane segments spans residues 704-727 (CVAA…GLLG), 733-770 (LIGV…LLVF), 790-812 (VWIG…SFLV), and 822-843 (IFAF…IKIF). The membrane (anion exchange) stretch occupies residues 704–1237 (CVAAVIFIYF…DEYNEMPMPV (534 aa)). The Extracellular segment spans residues 844–896 (QEHPLHGCSVSNSSETDSSENATWAGAGSTLGPANRSSAGQAGQGRPRGQPNT). N-linked (GlcNAc...) asparagine glycans are attached at residues asparagine 855, asparagine 864, and asparagine 878. The chain crosses the membrane as a helical span at residues 897–914 (ALLSLVLMAGTFFIAFFL). The Cytoplasmic segment spans residues 915-929 (RKFKNSRFFPGRIRR). Transmembrane regions (helical) follow at residues 930-950 (VIGD…DYSI), 984-1006 (PFPV…LIFM), 1032-1053 (LLLI…LAAA), 1087-1132 (VTGL…IQFY), and 1159-1195 (MHLF…TVPL). A lipid anchor (S-palmitoyl cysteine) is attached at cysteine 1169.

This sequence belongs to the anion exchanger (TC 2.A.31) family. In terms of tissue distribution, expressed in the ileum (at protein level).

It is found in the cell membrane. Its subcellular location is the apical cell membrane. The protein localises to the basolateral cell membrane. It carries out the reaction hydrogencarbonate(in) + chloride(out) = hydrogencarbonate(out) + chloride(in). Sodium-independent anion exchanger which mediates the electroneutral exchange of chloride for bicarbonate ions across the cell membrane. Plays an important role in osteoclast differentiation and function. Regulates bone resorption and calpain-dependent actin cytoskeleton organization in osteoclasts via anion exchange-dependent control of pH. Essential for intracellular pH regulation in CD8(+) T-cells upon CD3 stimulation, modulating CD8(+) T-cell response. This is Anion exchange protein 2 (SLC4A2) from Oryctolagus cuniculus (Rabbit).